The sequence spans 712 residues: Frizzled-6 (712 aa).

An N-terminal signal peptide occupies residues 1–18; that stretch reads MEMFTFLLTCVFLPFVRG. Positions 19 to 132 constitute an FZ domain; that stretch reads HSLFTCEPIT…CDRLQYCDET (114 aa). Over 19–201 the chain is Extracellular; it reads HSLFTCEPIT…SDELEFAKSF (183 aa). 5 disulfide bridges follow: C24–C85, C32–C78, C69–C106, C95–C129, and C99–C123. The N-linked (GlcNAc...) asparagine glycan is linked to N38. A helical membrane pass occupies residues 202–222; that stretch reads IGIVSIFCLCATLFTFLTFLI. The Cytoplasmic segment spans residues 223–233; sequence DVKRFRYPERP. The chain crosses the membrane as a helical span at residues 234-254; that stretch reads IIYYSVCYSIVSLMYFIGFLL. At 255-284 the chain is on the extracellular side; sequence GDRTACNKADEKLELGDTVVLGSQNKACTV. The helical transmembrane segment at 285–305 threads the bilayer; it reads LFMFLYFFTMAGTVWWVILTI. Topologically, residues 306–324 are cytoplasmic; sequence TWFLAAGRKWSCEAIEQKA. Residues 325 to 345 form a helical membrane-spanning segment; it reads VWFHAVAWGIPGFLTVMLLAM. At 346–370 the chain is on the extracellular side; it reads NKVEGDNISGVCFVGLYDLDASRYF. N-linked (GlcNAc...) asparagine glycosylation is present at N352. A helical transmembrane segment spans residues 371-391; it reads VLLPLCLCVFVGLSLLLAGII. Residues 392–416 are Cytoplasmic-facing; sequence SLNHVRQVIQHDGRNQEKLKKFMIR. Residues 417 to 437 traverse the membrane as a helical segment; sequence IGVFSGLYLVPLVTLLGCYVY. The Extracellular portion of the chain corresponds to 438–473; it reads EQVNRITWEITWVSDHCRQYHIPCPYQAKTETRPEL. Residues 474–494 traverse the membrane as a helical segment; that stretch reads ALFMIKYLMTLIVGISAVFWV. Residues 495–712 lie on the Cytoplasmic side of the membrane; the sequence is GSKKTCTEWA…EHGTGSHSDT (218 aa). The Lys-Thr-X-X-X-Trp motif, mediates interaction with the PDZ domain of Dvl family members motif lies at 498 to 503; it reads KTCTEW. The disordered stretch occupies residues 588-712; the sequence is EIQTSPETSV…EHGTGSHSDT (125 aa). Basic and acidic residues-rich tracts occupy residues 628 to 637 and 652 to 664; these read LCEEQADRKG and TRSE…KSDV. Residues 668–693 show a composition bias toward polar residues; it reads GPMQSSSLQVPGSSEPGSLKGSTSLL. Positions 700 to 712 are enriched in basic and acidic residues; sequence GRKEHGTGSHSDT.

The protein belongs to the G-protein coupled receptor Fz/Smo family. Interacts with LMBR1L. Post-translationally, ubiquitinated by ZNRF3, leading to its degradation by the proteasome.

Its subcellular location is the membrane. It localises to the cell membrane. It is found in the cell surface. The protein resides in the apical cell membrane. The protein localises to the cytoplasmic vesicle membrane. Its subcellular location is the endoplasmic reticulum membrane. In terms of biological role, receptor for Wnt proteins. Most of frizzled receptors are coupled to the beta-catenin canonical signaling pathway, which leads to the activation of disheveled proteins, inhibition of GSK-3 kinase, nuclear accumulation of beta-catenin and activation of Wnt target genes. A second signaling pathway involving PKC and calcium fluxes has been seen for some family members, but it is not yet clear if it represents a distinct pathway or if it can be integrated in the canonical pathway, as PKC seems to be required for Wnt-mediated inactivation of GSK-3 kinase. Both pathways seem to involve interactions with G-proteins. Activation by Wnt5A stimulates PKC activity via a G-protein-dependent mechanism. Involved in transduction and intercellular transmission of polarity information during tissue morphogenesis and/or in differentiated tissues. Together with FZD3, is involved in the neural tube closure and plays a role in the regulation of the establishment of planar cell polarity (PCP), particularly in the orientation of asymmetric bundles of stereocilia on the apical faces of a subset of auditory and vestibular sensory cells located in the inner ear. This chain is Frizzled-6 (FZD6), found in Canis lupus familiaris (Dog).